The primary structure comprises 512 residues: ADP,ATP carrier protein 4 (512 aa).

Helical transmembrane passes span 34-54 (ISKF…QNLI), 71-91 (ISFL…VIYV), 102-122 (IFYL…YVIF), 157-177 (FSLF…LLFW), 192-212 (FYPL…HFLE), 231-251 (FHTL…IVSI), 296-316 (LIAT…GPWK), 330-350 (AAFI…FVLL), 361-381 (FTSA…FFAV), 390-410 (LIIA…IGAI), and 476-496 (SISI…IWAT).

The protein belongs to the ADP/ATP translocase tlc family.

Its subcellular location is the cell membrane. Functionally, provides the rickettsial cell with host ATP in exchange for rickettsial ADP. This is an obligate exchange system. This energy acquiring activity is an important component of rickettsial parasitism. The polypeptide is ADP,ATP carrier protein 4 (tlcD) (Rickettsia prowazekii (strain Madrid E)).